The sequence spans 306 residues: Grixazone synthase (306 aa).

H39, H58, H67, H222, H226, and H248 together coordinate Cu(2+).

It belongs to the tyrosinase family. Cu(2+) serves as cofactor.

It carries out the reaction 2 3-amino-4-hydroxybenzoate + N-acetyl-L-cysteine + 2 O2 + H(+) = grixazone B + CO2 + 4 H2O. The enzyme catalyses 2 3-amino-4-hydroxybenzaldehyde + N-acetyl-L-cysteine + 2 O2 = grixazone A + formate + 3 H2O + H(+). It catalyses the reaction 4 2-aminophenol + 3 O2 = 2 2-aminophenoxazin-3-one + 6 H2O. Its activity is regulated as follows. Inhibited by 3-amino-4-hydroxybenzensulfonic acid, 4-hydroxy-3-nitrobenzaldehyde, L-tyrosine, p-hydroxybenzaldehyde. Activated by the copper chaperone GriE. Functionally, involved in the biosynthesis of the parasiticide antibiotic grixazone. Catalyzes the oxidation of 3-amino-4-hydroxybenzoate (3,4-AHBOA) to yield the corresponding quinone imine which is then non-enzymatically conjugated with the thiol group of N-acetylcysteine. The resultant compound is oxidized to its quinone imine enzymatically and is then dimerized non-enzymatically with another quinone imine oxidized by GriF to yield grixazone B. 3-amino-4-hydroxybenzaldehyde (3,4-AHBAL) can also be used as substrate to yield grixazone A. In the grixazone biosynthetic pathway, it can also function as an o-aminophenol oxidase that catalyzes the formation of the phenoxazinone chromophore from alpha-aminophenol. It can also use 2-amino-4-methylphenol, and to a lesser extent, 3,4-dihydroxybenzaldehyde, catechol and 3,4-dihydroxy-L-phenylalanine (L-DOPA) as substrates. In contrast to tyrosinases, it does not display monophenolase activity. This Streptomyces griseus subsp. griseus (strain JCM 4626 / CBS 651.72 / NBRC 13350 / KCC S-0626 / ISP 5235) protein is Grixazone synthase.